The following is a 218-amino-acid chain: GTP cyclohydrolase 1 (218 aa).

Cysteine 109, histidine 112, and cysteine 180 together coordinate Zn(2+).

This sequence belongs to the GTP cyclohydrolase I family. As to quaternary structure, toroid-shaped homodecamer, composed of two pentamers of five dimers.

The catalysed reaction is GTP + H2O = 7,8-dihydroneopterin 3'-triphosphate + formate + H(+). The protein operates within cofactor biosynthesis; 7,8-dihydroneopterin triphosphate biosynthesis; 7,8-dihydroneopterin triphosphate from GTP: step 1/1. The polypeptide is GTP cyclohydrolase 1 (Haemophilus influenzae (strain 86-028NP)).